Here is a 335-residue protein sequence, read N- to C-terminus: tRNA N6-adenosine threonylcarbamoyltransferase (335 aa).

2 residues coordinate Fe cation: H112 and H116. Substrate contacts are provided by residues 134 to 138, D167, G180, and N273; that span reads VVSGG. D301 lines the Fe cation pocket.

It belongs to the KAE1 / TsaD family. The cofactor is Fe(2+).

It localises to the cytoplasm. The catalysed reaction is L-threonylcarbamoyladenylate + adenosine(37) in tRNA = N(6)-L-threonylcarbamoyladenosine(37) in tRNA + AMP + H(+). Functionally, required for the formation of a threonylcarbamoyl group on adenosine at position 37 (t(6)A37) in tRNAs that read codons beginning with adenine. Is involved in the transfer of the threonylcarbamoyl moiety of threonylcarbamoyl-AMP (TC-AMP) to the N6 group of A37, together with TsaE and TsaB. TsaD likely plays a direct catalytic role in this reaction. This Shouchella clausii (strain KSM-K16) (Alkalihalobacillus clausii) protein is tRNA N6-adenosine threonylcarbamoyltransferase.